The chain runs to 1113 residues: StAR-related lipid transfer protein 13 (1113 aa).

Residue M1 is modified to N-acetylmethionine. One can recognise an SAM domain in the interval 55–122 (QQEIEAKEAC…LNKCASMKLD (68 aa)). Disordered stretches follow at residues 162 to 254 (LLPR…PTRA) and 307 to 346 (PNGD…VSTP). The span at 177–188 (MRNTTSSESVLT) shows a compositional bias: polar residues. Composition is skewed to low complexity over residues 197–213 (SIHS…SQPG) and 326–344 (SGKS…SGVS). At S411 the chain carries Phosphoserine. The segment covering 536-549 (FEGNSVSEGRTTPS) has biased composition (polar residues). Positions 536 to 580 (FEGNSVSEGRTTPSDVERDVTSLNESEPPGVRDRRDSGVGASLTR) are disordered. The 206-residue stretch at 663-868 (VPLIVHVQRT…HMIMECDRLF (206 aa)) folds into the Rho-GAP domain. The START domain occupies 899–1107 (LEESGATFHT…RNSFQPLIAE (209 aa)).

In terms of assembly, homodimer. Interacts with TAX1BP1. In terms of tissue distribution, ubiquitously expressed. Underexpressed in hepatocellular carcinoma cells and some breast cancer cell lines.

The protein localises to the cytoplasm. The protein resides in the membrane. Its subcellular location is the mitochondrion membrane. It is found in the lipid droplet. GTPase-activating protein for RhoA, and perhaps for Cdc42. May be involved in regulation of cytoskeletal reorganization, cell proliferation and cell motility. Acts a tumor suppressor in hepatocellular carcinoma cells. This Homo sapiens (Human) protein is StAR-related lipid transfer protein 13 (STARD13).